Reading from the N-terminus, the 380-residue chain is Glycerate kinase (380 aa).

It belongs to the glycerate kinase type-1 family.

It carries out the reaction (R)-glycerate + ATP = (2R)-3-phosphoglycerate + ADP + H(+). In Halalkalibacterium halodurans (strain ATCC BAA-125 / DSM 18197 / FERM 7344 / JCM 9153 / C-125) (Bacillus halodurans), this protein is Glycerate kinase (glxK).